Here is a 75-residue protein sequence, read N- to C-terminus: Serine rich endogenous peptide 20 (75 aa).

The first 25 residues, 1–25 (MYKLTLCILTLSFLLLSGLSNTVLA), serve as a signal peptide directing secretion. The SCOOP motif signature appears at 52 to 66 (KIGASGSNSGRAPSC). Residues 54–75 (GASGSNSGRAPSCNNSCKPNRP) form a disordered region. The short motif at 56 to 58 (SGS) is the SxS motif essential for MIK2 binding element. Polar residues predominate over residues 56–75 (SGSNSGRAPSCNNSCKPNRP).

It belongs to the serine rich endogenous peptide (SCOOP) phytocytokine family. In terms of assembly, interacts with MIK2 (via extracellular leucine-rich repeat domain); this interaction triggers the formation of complex between MIK2 and the BAK1/SERK3 and SERK4 coreceptors, and subsequent BAK1 activation by phosphorylation. In terms of tissue distribution, mostly expressed in roots.

It is found in the cell membrane. It localises to the secreted. The protein localises to the extracellular space. The protein resides in the apoplast. Brassicaceae-specific phytocytokine (plant endogenous peptide released into the apoplast) perceived by MIK2 in a BAK1/SERK3 and SERK4 coreceptors-dependent manner, that modulates various physiological and antimicrobial processes including growth prevention and reactive oxygen species (ROS) response regulation. Inhibits root growth. This Arabidopsis thaliana (Mouse-ear cress) protein is Serine rich endogenous peptide 20.